Reading from the N-terminus, the 95-residue chain is Large ribosomal subunit protein bL25 (95 aa).

The protein belongs to the bacterial ribosomal protein bL25 family. Part of the 50S ribosomal subunit; part of the 5S rRNA/L5/L18/L25 subcomplex. Contacts the 5S rRNA. Binds to the 5S rRNA independently of L5 and L18.

This is one of the proteins that binds to the 5S RNA in the ribosome where it forms part of the central protuberance. The chain is Large ribosomal subunit protein bL25 from Haemophilus influenzae (strain ATCC 51907 / DSM 11121 / KW20 / Rd).